Consider the following 898-residue polypeptide: Filament-like plant protein 7 (898 aa).

Coiled coils occupy residues 23 to 224 and 287 to 320; these read EVVA…TAEA and EKIN…LQFS. 3 disordered regions span residues 429–482, 693–723, and 777–835; these read DNRP…DIKS, PGNQ…KLEE, and KSNN…GGNS. A compositionally biased stretch (low complexity) spans 434–459; it reads SSPICSSDSISATGPVENESNENSSE. Polar residues predominate over residues 460–469; that stretch reads ATKTSGTVYS. Residues 703–764 adopt a coiled-coil conformation; it reads VEEEANDKTA…KALTNSKETA (62 aa). Positions 808 to 822 are enriched in basic and acidic residues; that stretch reads MKAEDHNTGESKDQK.

Belongs to the FPP family. In terms of assembly, interacts with WPP/MAF proteins.

This chain is Filament-like plant protein 7 (FPP7), found in Arabidopsis thaliana (Mouse-ear cress).